The sequence spans 595 residues: Actin-histidine N-methyltransferase (595 aa).

Positions 1–22 (MGKKSRVKTQKSGTGATATVSP) are disordered. The segment covering 10–20 (QKSGTGATATV) has biased composition (polar residues). S-adenosyl-L-methionine is bound by residues Arg-75, 104 to 106 (EGF), Arg-254, 275 to 279 (DMCNH), and 325 to 327 (SGF). One can recognise an SET domain in the interval 94 to 314 (EGFEMVNFKE…AGEQIYIFYG (221 aa)). At Ser-513 the chain carries Phosphoserine. The interval 552-595 (LVNGENCIPNGTRSENEDLNQEENKRAVEDAKGSSSDSTDAVKK) is disordered. The segment covering 573–583 (EENKRAVEDAK) has biased composition (basic and acidic residues). Positions 584 to 595 (GSSSDSTDAVKK) are enriched in polar residues.

It belongs to the class V-like SAM-binding methyltransferase superfamily. SETD3 actin-histidine methyltransferase family. Interacts with MYOD1. Post-translationally, phosphorylated by GSK3B, which is required for recognition by the SCF(FBXW7) complex and subsequent degradation. Ubiquitinated by the SCF(FBXW7) complex following phosphorylation by GSK3B, leading to its degradation by the proteasome.

It is found in the cytoplasm. The protein resides in the nucleus. It catalyses the reaction L-histidyl-[protein] + S-adenosyl-L-methionine = N(tele)-methyl-L-histidyl-[protein] + S-adenosyl-L-homocysteine + H(+). Protein-histidine N-methyltransferase that specifically mediates 3-methylhistidine (tele-methylhistidine) methylation of actin at 'His-73'. Histidine methylation of actin is required for smooth muscle contraction of the laboring uterus during delivery. Does not have protein-lysine N-methyltransferase activity and probably only catalyzes histidine methylation of actin. The sequence is that of Actin-histidine N-methyltransferase from Otolemur garnettii (Small-eared galago).